We begin with the raw amino-acid sequence, 323 residues long: rRNA 2'-O-methyltransferase fibrillarin (323 aa).

Residues 1–80 (MSFRPGSRGG…GARGGAKGGA (80 aa)) form a disordered region. Over residues 7–78 (SRGGARGGRG…RGGARGGAKG (72 aa)) the composition is skewed to gly residues. R8, R12, R15, R19, R25, R29, R35, R39, R43, R49, R53, R57, R61, R65, R69, and R73 each carry asymmetric dimethylarginine. Residues 175-176 (TS), 194-195 (EF), 219-220 (DA), and 239-242 (DVAQ) each bind S-adenosyl-L-methionine.

It belongs to the methyltransferase superfamily. Fibrillarin family. In terms of assembly, component of box C/D small nucleolar ribonucleoprotein (snoRNP) particles that contain SNU13, NOP1, SIK1/NOP56 and NOP58, plus a guide RNA. In terms of processing, by homology to other fibrillarins, some or all of the N-terminal domain arginines are modified to asymmetric dimethylarginine (DMA).

It localises to the nucleus. It is found in the nucleolus. The catalysed reaction is L-glutaminyl-[histone H2A] + S-adenosyl-L-methionine = N(5)-methyl-L-glutaminyl-[histone H2A] + S-adenosyl-L-homocysteine + H(+). In terms of biological role, S-adenosyl-L-methionine-dependent methyltransferase that has the ability to methylate both RNAs and proteins. Involved in pre-rRNA processing. Utilizes the methyl donor S-adenosyl-L-methionine to catalyze the site-specific 2'-hydroxyl methylation of ribose moieties in pre-ribosomal RNA. Site specificity is provided by a guide RNA that base pairs with the substrate. Methylation occurs at a characteristic distance from the sequence involved in base pairing with the guide RNA. Also acts as a protein methyltransferase by mediating methylation of 'Gln-105' of histone H2A (H2AQ105me), a modification that impairs binding of the FACT complex and is specifically present at 35S ribosomal DNA locus. The protein is rRNA 2'-O-methyltransferase fibrillarin (NOP1) of Candida glabrata (strain ATCC 2001 / BCRC 20586 / JCM 3761 / NBRC 0622 / NRRL Y-65 / CBS 138) (Yeast).